The chain runs to 668 residues: UvrABC system protein B (668 aa).

A Helicase ATP-binding domain is found at 31 to 416; the sequence is QGITDGVPAQ…RGHIIEQIIR (386 aa). Position 44-51 (44-51) interacts with ATP; the sequence is GTTGSGKT. A Beta-hairpin motif is present at residues 97-120; the sequence is YYDYYQPEAYIARSDTYIEKSLLI. Positions 433-596 constitute a Helicase C-terminal domain; that stretch reads QIDDLLEEIR…ITPQPIIKPI (164 aa). One can recognise a UVR domain in the interval 621–656; the sequence is EASIKTYEEAMYQAAQEFQFDEAAKYRDLMNAAKKQ.

The protein belongs to the UvrB family. Forms a heterotetramer with UvrA during the search for lesions. Interacts with UvrC in an incision complex.

It localises to the cytoplasm. Its function is as follows. The UvrABC repair system catalyzes the recognition and processing of DNA lesions. A damage recognition complex composed of 2 UvrA and 2 UvrB subunits scans DNA for abnormalities. Upon binding of the UvrA(2)B(2) complex to a putative damaged site, the DNA wraps around one UvrB monomer. DNA wrap is dependent on ATP binding by UvrB and probably causes local melting of the DNA helix, facilitating insertion of UvrB beta-hairpin between the DNA strands. Then UvrB probes one DNA strand for the presence of a lesion. If a lesion is found the UvrA subunits dissociate and the UvrB-DNA preincision complex is formed. This complex is subsequently bound by UvrC and the second UvrB is released. If no lesion is found, the DNA wraps around the other UvrB subunit that will check the other stand for damage. The chain is UvrABC system protein B from Chlamydia trachomatis serovar D (strain ATCC VR-885 / DSM 19411 / UW-3/Cx).